The following is a 173-amino-acid chain: MSLRLVSPIKAFADGIVAVAIAVVLMFGLANTPRAVAADERLQFTATTLSGAPFDGASLQGKPAVLWFWTPWCPFCNAEAPSLSQVAAANPAVTFVGIATRADVGAMQSFVSKYNLNFTNLNDADGVIWARYNVPWQPAFVFYRADGTSTFVNNPTAAMSQDELSGRVAALTS.

A signal peptide spans 1-38 (MSLRLVSPIKAFADGIVAVAIAVVLMFGLANTPRAVAA). A disulfide bond links Cys-73 and Cys-76.

It belongs to the thioredoxin family.

It localises to the secreted. Its function is as follows. Disulfide oxidoreductase that catalyzes the oxidation of reduced, unfolded secreted proteins to form disulfide bonds. Despite a weak homology to thioredoxin this cannot serve as a substrate for thioredoxin reductase. This is Soluble secreted antigen MPT53 (mpt53) from Mycobacterium bovis (strain ATCC BAA-935 / AF2122/97).